A 541-amino-acid chain; its full sequence is Man(5)GlcNAc(2)-PP-dolichol translocation protein RFT1 (541 aa).

A run of 11 helical transmembrane segments spans residues 16 to 36 (SGLL…AFIL), 45 to 62 (GIVN…TFLA), 85 to 105 (LLWL…WVWL), 123 to 143 (VLFF…WVLA), 154 to 176 (LAES…WLPH), 187 to 207 (LLYT…LLRS), 335 to 355 (LALL…QLAL), 376 to 396 (CLYV…FAAM), 414 to 434 (SFLV…FIMA), 470 to 490 (VLLG…AFLC), and 499 to 519 (LAHI…AFLT).

This sequence belongs to the RFT1 family.

The protein resides in the endoplasmic reticulum membrane. Its pathway is protein modification; protein glycosylation. Intramembrane glycolipid transporter that operates in the biosynthetic pathway of dolichol-linked oligosaccharides, the glycan precursors employed in protein asparagine (N)-glycosylation. The sequential addition of sugars to dolichol pyrophosphate produces dolichol-linked oligosaccharides containing fourteen sugars, including two GlcNAcs, nine mannoses and three glucoses. Once assembled, the oligosaccharide is transferred from the lipid to nascent proteins by oligosaccharyltransferases. The assembly of dolichol-linked oligosaccharides begins on the cytosolic side of the endoplasmic reticulum membrane and finishes in its lumen. RFT1 could mediate the translocation of the cytosolically oriented intermediate DolPP-GlcNAc2Man5, produced by ALG11, into the ER lumen where dolichol-linked oligosaccharides assembly continues. However, the intramembrane lipid transporter activity could not be confirmed in vitro. This chain is Man(5)GlcNAc(2)-PP-dolichol translocation protein RFT1, found in Mus musculus (Mouse).